We begin with the raw amino-acid sequence, 377 residues long: Alanine racemase (377 aa).

Catalysis depends on lysine 37, which acts as the Proton acceptor; specific for D-alanine. Lysine 37 bears the N6-(pyridoxal phosphate)lysine mark. Arginine 135 serves as a coordination point for substrate. Tyrosine 271 functions as the Proton acceptor; specific for L-alanine in the catalytic mechanism. Residue methionine 319 participates in substrate binding.

This sequence belongs to the alanine racemase family. It depends on pyridoxal 5'-phosphate as a cofactor.

It catalyses the reaction L-alanine = D-alanine. The protein operates within amino-acid biosynthesis; D-alanine biosynthesis; D-alanine from L-alanine: step 1/1. In terms of biological role, catalyzes the interconversion of L-alanine and D-alanine. May also act on other amino acids. This Helicobacter pylori (strain HPAG1) protein is Alanine racemase (alr).